The following is a 306-amino-acid chain: UDP-N-acetylenolpyruvoylglucosamine reductase (306 aa).

An FAD-binding PCMH-type domain is found at 34–199 (RVGGPAQLLF…TSVRLRGAIA (166 aa)). Arg179 is an active-site residue. The Proton donor role is filled by Ser228. The active site involves Glu298.

Belongs to the MurB family. FAD serves as cofactor.

The protein resides in the cytoplasm. It carries out the reaction UDP-N-acetyl-alpha-D-muramate + NADP(+) = UDP-N-acetyl-3-O-(1-carboxyvinyl)-alpha-D-glucosamine + NADPH + H(+). The protein operates within cell wall biogenesis; peptidoglycan biosynthesis. In terms of biological role, cell wall formation. This is UDP-N-acetylenolpyruvoylglucosamine reductase from Rhodopseudomonas palustris (strain BisA53).